Here is a 261-residue protein sequence, read N- to C-terminus: Phosphonates import ATP-binding protein PhnC (261 aa).

The region spanning 9 to 253 is the ABC transporter domain; the sequence is IQLKDVSKIY…VFDDIYNGGN (245 aa). 42–49 serves as a coordination point for ATP; the sequence is GLSGAGKS.

It belongs to the ABC transporter superfamily. Phosphonates importer (TC 3.A.1.9.1) family. In terms of assembly, the complex is composed of two ATP-binding proteins (PhnC), two transmembrane proteins (PhnE) and a solute-binding protein (PhnD).

The protein resides in the cell membrane. It catalyses the reaction phosphonate(out) + ATP + H2O = phosphonate(in) + ADP + phosphate + H(+). Part of the ABC transporter complex PhnCDE involved in phosphonates import. Responsible for energy coupling to the transport system. The chain is Phosphonates import ATP-binding protein PhnC from Lactobacillus gasseri (strain ATCC 33323 / DSM 20243 / BCRC 14619 / CIP 102991 / JCM 1131 / KCTC 3163 / NCIMB 11718 / NCTC 13722 / AM63).